A 280-amino-acid chain; its full sequence is Dexamethasone-induced Ras-related protein 1 (280 aa).

Residue Cys11 is modified to S-nitrosocysteine. 31–38 (GSSKVGKT) lines the GTP pocket. The short motif at 53 to 61 (YTPTIEDFH) is the Effector region element. Residues 78–82 (DTSGN) and 145–148 (NKGD) each bind GTP. Cysteine methyl ester is present on Cys277. Cys277 carries S-farnesyl cysteine lipidation. Residues 278–280 (VIS) constitute a propeptide, removed in mature form.

It belongs to the small GTPase superfamily. RasD family. Forms a ternary complex with CAPON and NOS1. Component of a complex, at least composed of APBB1, RASD1/DEXRAS1 and APP. Interacts with APBB1/FE65. Forms. Post-translationally, S-nitrosylation stimulates guanine-nucleotide exchange activity. As to expression, prominently found in brain at both mRNA and protein levels. Moderate expression in testis and lung. Slightly expressed in heart, spleen, skeletal muscle, liver and kidney.

It is found in the cell membrane. The protein resides in the cytoplasm. The protein localises to the perinuclear region. Its subcellular location is the nucleus. Small GTPase. Negatively regulates the transcription regulation activity of the APBB1/FE65-APP complex via its interaction with APBB1/FE65. The polypeptide is Dexamethasone-induced Ras-related protein 1 (Rasd1) (Rattus norvegicus (Rat)).